The primary structure comprises 498 residues: Tyrosine 3-monooxygenase (498 aa).

Residues 1 to 10 (MPTPSASSPQ) show a composition bias toward polar residues. The disordered stretch occupies residues 1-33 (MPTPSASSPQPKGFRRAVSEQDTKQAEAVTSPR). Phosphoserine occurs at positions 19 and 31. S40 bears the Phosphoserine; by CaMK2 and PKA mark. 3 residues coordinate Fe cation: H331, H336, and E376. S472 is modified (phosphoserine).

Belongs to the biopterin-dependent aromatic amino acid hydroxylase family. In terms of assembly, homotetramer. Interacts (when phosphorylated at Ser-19) with YWHAG; one YWHAG dimer bounds to one TH tetramer and this interaction may influence the phosphorylation and dephosphorylation of other sites. Interacts with NT5DC2; the interaction results in reduced phosphorylation and decreased catalytic activity of TH. Requires Fe(2+) as cofactor. Phosphorylated on Ser-19, Ser-31 and Ser-40 by several protein kinases with different site specificities. Phosphorylation at Ser-31 and Ser-40 leads to an increase of TH activity. Phosphorylation at Ser-40 activates the enzyme and also counteracts the feedback inhibition of TH by catecholamines. Phosphorylation of Ser-19 and Ser-31 triggers the proteasomal degradation of TH through the ubiquitin-proteasome pathway. Phosphorylation at Ser-31 facilitates transport of TH from the soma to the nerve terminals via the microtubule network. Phosphorylation at Ser-19 induces the high-affinity binding to the 14-3-3 protein YWHAG; this interaction may influence the phosphorylation and dephosphorylation of other sites. Ser-19 increases the phosphorylation at Ser-40 in a hierarchical manner, leading to increased activity. As to expression, expressed in the adrenal gland. Expressed in the retina. Expressed in the in the striatum (at protein level).

The protein localises to the cytoplasm. The protein resides in the perinuclear region. It localises to the nucleus. It is found in the cell projection. Its subcellular location is the axon. The protein localises to the cytoplasmic vesicle. The protein resides in the secretory vesicle. It localises to the synaptic vesicle. The catalysed reaction is (6R)-L-erythro-5,6,7,8-tetrahydrobiopterin + L-tyrosine + O2 = (4aS,6R)-4a-hydroxy-L-erythro-5,6,7,8-tetrahydrobiopterin + L-dopa. It participates in catecholamine biosynthesis; dopamine biosynthesis; dopamine from L-tyrosine: step 1/2. With respect to regulation, inhibited in feedback fashion by the catecholamine neurotransmitters, especially by dopamine in competition with tetrahydrobiopterin. Phosphorylation of several Ser/Thr residues in the N-terminus regulates the catalytic activity. Ser-31 and Ser-40 are readily phosphorylated to activate the catalytic activity. A Cysteine modification induced by N-ethylmaleimide (NEM), inhibits tyrosine 3-monooxygenase activity through the modification of the Cys-177. Its function is as follows. Catalyzes the conversion of L-tyrosine to L-dihydroxyphenylalanine (L-Dopa), the rate-limiting step in the biosynthesis of catecholamines, dopamine, noradrenaline, and adrenaline. Uses tetrahydrobiopterin and molecular oxygen to convert tyrosine to L-Dopa. In addition to tyrosine, is able to catalyze the hydroxylation of phenylalanine and tryptophan with lower specificity. Positively regulates the regression of retinal hyaloid vessels during postnatal development. This is Tyrosine 3-monooxygenase (Th) from Mus musculus (Mouse).